Reading from the N-terminus, the 67-residue chain is DNA-directed RNA polymerase subunit omega (67 aa).

The protein belongs to the RNA polymerase subunit omega family. As to quaternary structure, the RNAP catalytic core consists of 2 alpha, 1 beta, 1 beta' and 1 omega subunit. When a sigma factor is associated with the core the holoenzyme is formed, which can initiate transcription.

It carries out the reaction RNA(n) + a ribonucleoside 5'-triphosphate = RNA(n+1) + diphosphate. Promotes RNA polymerase assembly. Latches the N- and C-terminal regions of the beta' subunit thereby facilitating its interaction with the beta and alpha subunits. In Polaromonas naphthalenivorans (strain CJ2), this protein is DNA-directed RNA polymerase subunit omega.